A 345-amino-acid polypeptide reads, in one-letter code: GDSL esterase/lipase At1g23500 (345 aa).

An N-terminal signal peptide occupies residues 1–24 (MNFSLLSTMLMALSSVCLFFVGYA). Serine 42 (nucleophile) is an active-site residue. N-linked (GlcNAc...) asparagine glycosylation occurs at asparagine 103. Residues aspartate 320 and histidine 323 contribute to the active site.

It belongs to the 'GDSL' lipolytic enzyme family.

The protein localises to the secreted. This chain is GDSL esterase/lipase At1g23500, found in Arabidopsis thaliana (Mouse-ear cress).